Reading from the N-terminus, the 87-residue chain is Selenoprotein W (87 aa).

Positions 10-13 form a cross-link, cysteinyl-selenocysteine (Cys-Sec); redox-active; the sequence is CGAU. Position 13 (U13) is a non-standard amino acid, selenocysteine. C37 bears the S-glutathionyl cysteine mark.

The protein belongs to the SelWTH family. Selenoprotein W subfamily. As to quaternary structure, interacts with DPYSL2, PRDX1, YWHAB, YWHAG, HSP70 and HSP90.

The protein localises to the cytoplasm. Its function is as follows. Plays a role as a glutathione (GSH)-dependent antioxidant. May be involved in a redox-related process. May play a role in the myopathies of selenium deficiency. The sequence is that of Selenoprotein W from Sus scrofa (Pig).